A 163-amino-acid chain; its full sequence is Beta-lactoglobulin-2 (163 aa).

Intrachain disulfides connect Cys66–Cys161 and Cys106–Cys120.

This sequence belongs to the calycin superfamily. Lipocalin family. In terms of assembly, monomer.

The protein resides in the secreted. In terms of biological role, lactoglobulin is the primary component of whey, it binds retinol and is probably involved in the transport of that molecule. The chain is Beta-lactoglobulin-2 (LGB2) from Equus asinus (Donkey).